Here is a 189-residue protein sequence, read N- to C-terminus: Segregation and condensation protein B (189 aa).

It belongs to the ScpB family. As to quaternary structure, homodimer. Homodimerization may be required to stabilize the binding of ScpA to the Smc head domains. Component of a cohesin-like complex composed of ScpA, ScpB and the Smc homodimer, in which ScpA and ScpB bind to the head domain of Smc. The presence of the three proteins is required for the association of the complex with DNA.

It is found in the cytoplasm. Its function is as follows. Participates in chromosomal partition during cell division. May act via the formation of a condensin-like complex containing Smc and ScpA that pull DNA away from mid-cell into both cell halves. In Streptococcus pneumoniae serotype 19F (strain G54), this protein is Segregation and condensation protein B.